A 184-amino-acid polypeptide reads, in one-letter code: uncharacterized protein (184 aa).

The 4Fe-4S domain maps to 72 to 135; it reads RKSQAILLIG…GIALGSAVKV (64 aa). Positions 92, 95, 100, and 118 each coordinate [4Fe-4S] cluster.

[4Fe-4S] cluster is required as a cofactor.

This is an uncharacterized protein from Archaeoglobus fulgidus (strain ATCC 49558 / DSM 4304 / JCM 9628 / NBRC 100126 / VC-16).